Here is a 187-residue protein sequence, read N- to C-terminus: Probable RNA 2'-phosphotransferase (187 aa).

The protein belongs to the KptA/TPT1 family.

Its function is as follows. Removes the 2'-phosphate from RNA via an intermediate in which the phosphate is ADP-ribosylated by NAD followed by a presumed transesterification to release the RNA and generate ADP-ribose 1''-2''-cyclic phosphate (APPR&gt;P). May function as an ADP-ribosylase. The protein is Probable RNA 2'-phosphotransferase of Pseudomonas syringae pv. tomato (strain ATCC BAA-871 / DC3000).